The sequence spans 270 residues: uncharacterized protein (270 aa).

Basic and acidic residues-rich tracts occupy residues 1–13 (MSEFKIVSRKDLY) and 49–73 (EVERTDSSLDLKESNNSAHEQKEEK). 3 disordered regions span residues 1 to 76 (MSEF…KQEE), 90 to 111 (STSPAQEEQGSSTQEKDTPQTE), and 204 to 270 (KKRR…FRTE). Residues 90–102 (STSPAQEEQGSST) show a composition bias toward polar residues. Over residues 204–216 (KKRRPGQKQRAAK) the composition is skewed to basic residues. Over residues 218–235 (LALERTKERDTKAREIKK) the composition is skewed to basic and acidic residues. Positions 236-253 (QLKKKFHKRGGKKNKKKV) are enriched in basic residues.

This is an uncharacterized protein from Saccharomyces cerevisiae (strain ATCC 204508 / S288c) (Baker's yeast).